The primary structure comprises 344 residues: Uroporphyrinogen decarboxylase (344 aa).

Residues 24–28 (RQAGR), Phe43, Asp74, Tyr151, Ser206, and His323 each bind substrate.

This sequence belongs to the uroporphyrinogen decarboxylase family. Homodimer.

The protein resides in the cytoplasm. It carries out the reaction uroporphyrinogen III + 4 H(+) = coproporphyrinogen III + 4 CO2. The protein operates within porphyrin-containing compound metabolism; protoporphyrin-IX biosynthesis; coproporphyrinogen-III from 5-aminolevulinate: step 4/4. In terms of biological role, catalyzes the decarboxylation of four acetate groups of uroporphyrinogen-III to yield coproporphyrinogen-III. The sequence is that of Uroporphyrinogen decarboxylase from Rhodobacter capsulatus (Rhodopseudomonas capsulata).